The sequence spans 216 residues: RNA chaperone ProQ (216 aa).

Basic and acidic residues predominate over residues 105-115 (ESKAKVAEKRK). The tract at residues 105 to 159 (ESKAKVAEKRKAQNAAKPGAKKSYKSKTVPAFKSSPKGTNQDNVKPKAKLPPPEK) is disordered.

The protein belongs to the ProQ family.

Its subcellular location is the cytoplasm. RNA chaperone with significant RNA binding, RNA strand exchange and RNA duplexing activities. The chain is RNA chaperone ProQ from Pseudoalteromonas atlantica (strain T6c / ATCC BAA-1087).